Consider the following 397-residue polypeptide: Methylthioribose kinase (397 aa).

Residues Asn-43, Lys-60, and 114–116 each bind ATP; that span reads EDL. Asp-232 lines the substrate pocket. Residue 249 to 251 coordinates ATP; the sequence is DPE. A substrate-binding site is contributed by Arg-340.

Belongs to the methylthioribose kinase family. In terms of assembly, homodimer.

It carries out the reaction 5-(methylsulfanyl)-D-ribose + ATP = 5-(methylsulfanyl)-alpha-D-ribose 1-phosphate + ADP + H(+). The protein operates within amino-acid biosynthesis; L-methionine biosynthesis via salvage pathway; S-methyl-5-thio-alpha-D-ribose 1-phosphate from S-methyl-5'-thioadenosine (hydrolase route): step 2/2. Catalyzes the phosphorylation of methylthioribose into methylthioribose-1-phosphate. The protein is Methylthioribose kinase of Bacillus pumilus (strain SAFR-032).